A 1207-amino-acid polypeptide reads, in one-letter code: Glycerotoxin paralog 1 (1207 aa).

The EGF-like domain occupies 79–120; sequence DLNECNRNNGGCTNGKCINTEGSYHCDCDRGYLATSSRTKCE. 5 disulfide bridges follow: C83–C95, C90–C104, C106–C119, C124–C167, and C151–C185. Residues 122–187 enclose the Sushi domain; sequence VECEPLTLAN…WSGTSPTCQN (66 aa). 2 consecutive WSC domains span residues 300 to 391 and 392 to 476; these read VGTS…YRDR and SLGF…NDQG. The N-linked (GlcNAc...) asparagine glycan is linked to N745.

Dimer; probably disulfide-linked. Interacts with Cav2.2/CACNA1B calcium channel. As to expression, expressed exclusively in the four pharyngeal lobes and in tissue located at the base of the teeth. No distinct expression is visible in the putative venom glands or elsewhere in the pharynx.

It is found in the secreted. In terms of biological role, potent venom presynaptic neurotoxin that promotes a long-lasting increase in spontaneous neurotransmitter release at the peripheral and central synapses by selective activation of Cav2.2/CACNA1B (N-type) channels. In addition, it drastically enhances synaptic-vesicle recycling, an effect that is prevented by the Cav2.2-specific inhibitor conotoxin-MVIIA. It activates Cav2.2/CACNA1B by shifting the current-voltage relationship of channels towards more hyperpolarized potentiels in a reversible manner. May have two separate sites of action on Cav2.2: one high affinity linked to changes in gating properties, and a second low affinity that results in block of current activity. The sequence is that of Glycerotoxin paralog 1 from Glycera tridactyla (Glycerine worm).